The sequence spans 1221 residues: RNA exonuclease 1 homolog (1221 aa).

The segment covering 37-46 (RGSGAPGDGG) has biased composition (gly residues). The segment at 37–75 (RGSGAPGDGGEAPPAAGLGYDPYNPELPKPPAQRENGTL) is disordered. A coiled-coil region spans residues 86–115 (LELELVNQAIEAVRSEVELEQRRYRELLET). Residues 116-598 (TREHRSAEAP…STSSAGADVD (483 aa)) form a disordered region. An Omega-N-methylarginine modification is found at Arg191. Phosphoserine is present on residues Ser287, Ser289, and Ser358. Residues 357–369 (ASPAQVQSSQDGG) are compositionally biased toward low complexity. Basic and acidic residues predominate over residues 393–417 (AQGKDKTKDKGRGRPVEKPRADKKG). A phosphoserine mark is found at Ser459, Ser499, and Ser526. Residues 492–501 (LVERKARSLD) are compositionally biased toward basic and acidic residues. An interaction with ELOA region spans residues 498–577 (RSLDEGASQD…KRLKASPPPS (80 aa)). Residues 580–593 (PSSSSSSSSSTSSA) show a composition bias toward low complexity. Ser610 carries the phosphoserine modification. Disordered regions lie at residues 619–692 (IFNE…TAQE) and 735–775 (HIPN…TRTL). Residues 627–648 (KTEDRGRLARQPPKEEKSEEKG) show a composition bias toward basic and acidic residues. Ser914 is modified (phosphoserine). Residues 1060-1209 (IYALDCEMSY…EDAGACMHLV (150 aa)) form the Exonuclease domain.

Belongs to the REXO1/REXO3 family. As to quaternary structure, interacts with TCEA2 and ELOA. Ubiquitously expressed.

The protein localises to the nucleus. Its function is as follows. Seems to have no detectable effect on transcription elongation in vitro. This chain is RNA exonuclease 1 homolog (REXO1), found in Homo sapiens (Human).